Here is a 222-residue protein sequence, read N- to C-terminus: Noggin (222 aa).

Positions 1–19 (MDHSQCLVTIYALMVFLGL) are cleaved as a signal peptide. Asparagine 61 carries N-linked (GlcNAc...) asparagine glycosylation. Cystine bridges form between cysteine 145–cysteine 182, cysteine 168–cysteine 218, cysteine 174–cysteine 220, and cysteine 197–cysteine 205.

The protein belongs to the noggin family. Homodimer.

It localises to the secreted. In terms of biological role, patterns the embryo by interrupting bone morphogenetic proteins (BMP) signaling. Binds BMP-4 and BMP-2 with high affinity. Can abolish BMP-4 activity by blocking binding to cognate cell-surface receptors. Capable of inducing dorsal development in embryos. Causes dorsal mesodermal differentiation of animal cap ectoderm when coexpressed with xWNT-8 and nuclear, sequence-specific DNA-binding protein xBRA. None of these molecules causes dorsal mesoderm formation when expressed alone. This Xenopus laevis (African clawed frog) protein is Noggin (nog).